Here is a 132-residue protein sequence, read N- to C-terminus: Fluoride-specific ion channel FluC 1 (132 aa).

4 consecutive transmembrane segments (helical) span residues 9-29 (LAAV…LSAL), 35-55 (ASWP…VGYF), 72-89 (LLGT…TMQV), and 100-120 (WGLA…AVHL). 2 residues coordinate Na(+): Gly-79 and Thr-82.

This sequence belongs to the fluoride channel Fluc/FEX (TC 1.A.43) family.

The protein resides in the cell membrane. It carries out the reaction fluoride(in) = fluoride(out). Its activity is regulated as follows. Na(+) is not transported, but it plays an essential structural role and its presence is essential for fluoride channel function. In terms of biological role, fluoride-specific ion channel. Important for reducing fluoride concentration in the cell, thus reducing its toxicity. In Mycolicibacterium paratuberculosis (strain ATCC BAA-968 / K-10) (Mycobacterium paratuberculosis), this protein is Fluoride-specific ion channel FluC 1.